Reading from the N-terminus, the 816-residue chain is H(+)/Cl(-) exchange transporter 5 (816 aa).

At 1–124 (MAMWQGAMDN…WALIHSVSDA (124 aa)) the chain is on the cytoplasmic side. 2 helical membrane-spanning segments follow: residues 125–162 (FSGW…ICTG) and 208–231 (VNYF…VKVF). The Selectivity filter part_1 signature appears at 237–241 (GSGIP). S238 contributes to the chloride binding site. Residues 240 to 247 (IPEIKTIL) constitute an intramembrane region (helical). The next 2 helical transmembrane spans lie at 256–275 (LGKW…VSSG) and 281–300 (EGPL…HRFN). Positions 279 to 283 (GKEGP) match the Selectivity filter part_2 motif. Intramembrane regions (helical) lie at residues 312–324 (VLSA…VSVA) and 328–336 (PIGGVLFSL). The next 5 membrane-spanning stretches (helical) occupy residues 348–366 (LWRS…RSIN), 389–414 (LVPF…IAWC), 422–442 (LGKY…ILAF), 498–518 (MWQL…TFGM), and 523–542 (GLFI…LGVG). A Selectivity filter part_3 motif is present at residues 523-527 (GLFIP). Residue F525 participates in chloride binding. The segment at residues 570–584 (GLYAMVGAAACLGGV) is an intramembrane region (helical). Residues 585–587 (TRM) constitute an intramembrane region (note=Loop between two helices). An intramembrane region (helical) is located at residues 588 to 599 (TVSLVVIMFELT). Positions 600 to 604 (GGLEY) form an intramembrane region, note=Loop between two helices. The chain crosses the membrane as a helical span at residues 605 to 622 (IVPLMAAAMTSKWVADAL). At 623-816 (GREGIYDAHI…NQDPDSILFN (194 aa)) the chain is on the cytoplasmic side. Residue Y628 participates in chloride binding. CBS domains lie at 656–720 (MKPR…ARKK) and 752–812 (ILDL…DPDS). Residues T666, 687 to 689 (YSG), and 794 to 797 (TKKD) each bind ATP.

Belongs to the chloride channel (TC 2.A.49) family. ClC-5/CLCN5 subfamily. As to quaternary structure, interacts with NEDD4 and NEDD4L. Post-translationally, ubiquitinated by NEDD4L in the presence of albumin; which promotes endocytosis and proteasomal degradation.

The protein resides in the golgi apparatus membrane. It localises to the endosome membrane. It is found in the cell membrane. The enzyme catalyses 2 chloride(in) + H(+)(out) = 2 chloride(out) + H(+)(in). Functionally, proton-coupled chloride transporter. Functions as antiport system and exchanges chloride ions against protons. Important for normal acidification of the endosome lumen. May play an important role in renal tubular function. The CLC channel family contains both chloride channels and proton-coupled anion transporters that exchange chloride or another anion for protons. The absence of conserved gating glutamate residues is typical for family members that function as channels. The sequence is that of H(+)/Cl(-) exchange transporter 5 (CLCN5) from Oryctolagus cuniculus (Rabbit).